The following is a 501-amino-acid chain: NAD(P)H-quinone oxidoreductase chain 4, chloroplastic (501 aa).

A run of 14 helical transmembrane segments spans residues 5–25, 38–58, 85–105, 112–130, 135–155, 168–188, 209–229, 243–263, 275–295, 306–326, 331–351, 387–407, 417–437, and 463–483; these read FPWLTIIVLLPIFAGSLIFFL, ICICSLELLLTTYTFCYHFQL, GLSIGPILLTGFITTLATLAA, SRLFHFLMLAMYSGQIGSF, LLLFFIMWELELIPVYLLLAM, FILYTAGGSIFLLIGVLGIGL, ALEIILYIGFLIAFSVKLPII, HYSTCMLLAGILLKMGAYGLV, SIFSPWLIIVGAIQIIYAALT, IAYSSVSHMGFIIIGIGSITD, GAILQIISHGFIGAALFFLAG, LALPGMSGFLAELIVFFGIIT, ILITFVMAIGMILTPIYLLSM, and LFVSISILLPIIAIGIYPDFV.

Belongs to the complex I subunit 4 family.

Its subcellular location is the plastid. It is found in the chloroplast thylakoid membrane. It carries out the reaction a plastoquinone + NADH + (n+1) H(+)(in) = a plastoquinol + NAD(+) + n H(+)(out). The catalysed reaction is a plastoquinone + NADPH + (n+1) H(+)(in) = a plastoquinol + NADP(+) + n H(+)(out). The polypeptide is NAD(P)H-quinone oxidoreductase chain 4, chloroplastic (Eucalyptus globulus subsp. globulus (Tasmanian blue gum)).